The chain runs to 362 residues: Divinyl chlorophyll a/b light-harvesting protein PcbF (362 aa).

Transmembrane regions (helical) follow at residues 27–47 (FIGSHVAHTGLICFAAGANTL), 89–109 (IAFIGVFHLICSMVYAGAGLL), 150–170 (FILGHHLIFFGVACIWFVEWA), 211–231 (VMGGHAFLAFVEITGGAFHIA), 251–271 (AVLSWSLAGIGWMAIIAAFWC), and 316–336 (LANVHYYLGFFFIQGHLWHAI).

The protein belongs to the PsbB/PsbC family. IsiA/Pcb subfamily. In terms of assembly, the antenna complex consists of divinyl chlorophylls (a and b) and divinyl chlorophyll a/b binding proteins and binds more divinyl chlorophyll b than does the antenna complex from high-light-adapted Prochlorococcus. It depends on divinyl chlorophyll a as a cofactor. Divinyl chlorophyll b is required as a cofactor.

It is found in the cellular thylakoid membrane. The antenna complex functions as a light receptor, it captures and delivers excitation energy to photosystems II and I. The Prochlorales pcb genes are not related to higher plant LHCs. The sequence is that of Divinyl chlorophyll a/b light-harvesting protein PcbF (pcbF) from Prochlorococcus marinus (strain NATL2A).